The sequence spans 85 residues: ATP synthase subunit c (85 aa).

Helical transmembrane passes span alanine 22–isoleucine 39 and alanine 65–leucine 85.

The protein belongs to the ATPase C chain family. As to quaternary structure, F-type ATPases have 2 components, F(1) - the catalytic core - and F(0) - the membrane proton channel. F(1) has five subunits: alpha(3), beta(3), gamma(1), delta(1), epsilon(1). F(0) has three main subunits: a(1), b(2) and c(10-14). The alpha and beta chains form an alternating ring which encloses part of the gamma chain. F(1) is attached to F(0) by a central stalk formed by the gamma and epsilon chains, while a peripheral stalk is formed by the delta and b chains.

It is found in the cell inner membrane. Its function is as follows. F(1)F(0) ATP synthase produces ATP from ADP in the presence of a proton or sodium gradient. F-type ATPases consist of two structural domains, F(1) containing the extramembraneous catalytic core and F(0) containing the membrane proton channel, linked together by a central stalk and a peripheral stalk. During catalysis, ATP synthesis in the catalytic domain of F(1) is coupled via a rotary mechanism of the central stalk subunits to proton translocation. Functionally, key component of the F(0) channel; it plays a direct role in translocation across the membrane. A homomeric c-ring of between 10-14 subunits forms the central stalk rotor element with the F(1) delta and epsilon subunits. The chain is ATP synthase subunit c from Bacteroides thetaiotaomicron (strain ATCC 29148 / DSM 2079 / JCM 5827 / CCUG 10774 / NCTC 10582 / VPI-5482 / E50).